The following is a 562-amino-acid chain: 3-(3-hydroxy-phenyl)propionate/3-hydroxycinnamic acid hydroxylase (562 aa).

FAD is bound by residues 8 to 37 (DVVI…IIEE) and 275 to 285 (FRKGRMLLAGD).

This sequence belongs to the PheA/TfdB FAD monooxygenase family. The cofactor is FAD.

The catalysed reaction is 3-(3-hydroxyphenyl)propanoate + NADH + O2 + H(+) = 3-(2,3-dihydroxyphenyl)propanoate + NAD(+) + H2O. It carries out the reaction (2E)-3-(3-hydroxyphenyl)prop-2-enoate + NADH + O2 + H(+) = (2E)-3-(2,3-dihydroxyphenyl)prop-2-enoate + NAD(+) + H2O. Its pathway is aromatic compound metabolism; 3-phenylpropanoate degradation. Its function is as follows. Catalyzes the insertion of one atom of molecular oxygen into position 2 of the phenyl ring of 3-(3-hydroxyphenyl)propionate (3-HPP) and hydroxycinnamic acid (3HCI). The sequence is that of 3-(3-hydroxy-phenyl)propionate/3-hydroxycinnamic acid hydroxylase from Mycolicibacterium smegmatis (strain ATCC 700084 / mc(2)155) (Mycobacterium smegmatis).